The following is a 72-amino-acid chain: Translation initiation factor IF-1 (72 aa).

An S1-like domain is found at 2–72; it reads AKEDCIEMQG…NKGRIIFRSR (71 aa).

It belongs to the IF-1 family. Component of the 30S ribosomal translation pre-initiation complex which assembles on the 30S ribosome in the order IF-2 and IF-3, IF-1 and N-formylmethionyl-tRNA(fMet); mRNA recruitment can occur at any time during PIC assembly.

It is found in the cytoplasm. One of the essential components for the initiation of protein synthesis. Stabilizes the binding of IF-2 and IF-3 on the 30S subunit to which N-formylmethionyl-tRNA(fMet) subsequently binds. Helps modulate mRNA selection, yielding the 30S pre-initiation complex (PIC). Upon addition of the 50S ribosomal subunit IF-1, IF-2 and IF-3 are released leaving the mature 70S translation initiation complex. This is Translation initiation factor IF-1 from Pasteurella multocida (strain Pm70).